The following is a 250-amino-acid chain: Small ribosomal subunit protein uS2 (250 aa).

It belongs to the universal ribosomal protein uS2 family.

The chain is Small ribosomal subunit protein uS2 from Acidovorax ebreus (strain TPSY) (Diaphorobacter sp. (strain TPSY)).